The sequence spans 660 residues: GRIP and coiled-coil domain-containing protein 2 (660 aa).

The segment at 1–28 (MSAPESSISPVPPPGSSSGGGKKLDSLP) is disordered. Coiled-coil stretches lie at residues 30–92 (EDLV…VENN), 115–464 (EWKE…KAIA), and 517–596 (DEYR…EYLK). The 52-residue stretch at 585–636 (ELSNEKNMEYLKNVFVQFLKPESVPAERDQLVIVLQRVLHLSPKEVEILKAA) folds into the GRIP domain.

The protein is GRIP and coiled-coil domain-containing protein 2 of Caenorhabditis elegans.